A 493-amino-acid polypeptide reads, in one-letter code: Glutamate--tRNA ligase (493 aa).

Residues Pro-10–Thr-20 carry the 'HIGH' region motif. Positions Lys-251–Arg-255 match the 'KMSKS' region motif. Lys-254 contributes to the ATP binding site.

It belongs to the class-I aminoacyl-tRNA synthetase family. Glutamate--tRNA ligase type 1 subfamily. Monomer.

The protein resides in the cytoplasm. It carries out the reaction tRNA(Glu) + L-glutamate + ATP = L-glutamyl-tRNA(Glu) + AMP + diphosphate. Catalyzes the attachment of glutamate to tRNA(Glu) in a two-step reaction: glutamate is first activated by ATP to form Glu-AMP and then transferred to the acceptor end of tRNA(Glu). The sequence is that of Glutamate--tRNA ligase from Pseudomonas putida (strain W619).